The chain runs to 435 residues: Gamma-glutamyl phosphate reductase (435 aa).

The protein belongs to the gamma-glutamyl phosphate reductase family.

It is found in the cytoplasm. It carries out the reaction L-glutamate 5-semialdehyde + phosphate + NADP(+) = L-glutamyl 5-phosphate + NADPH + H(+). It participates in amino-acid biosynthesis; L-proline biosynthesis; L-glutamate 5-semialdehyde from L-glutamate: step 2/2. Its function is as follows. Catalyzes the NADPH-dependent reduction of L-glutamate 5-phosphate into L-glutamate 5-semialdehyde and phosphate. The product spontaneously undergoes cyclization to form 1-pyrroline-5-carboxylate. The chain is Gamma-glutamyl phosphate reductase from Xylella fastidiosa (strain M12).